The chain runs to 375 residues: Succinyl-diaminopimelate desuccinylase (375 aa).

Residue histidine 66 participates in Zn(2+) binding. The active site involves aspartate 68. Position 99 (aspartate 99) interacts with Zn(2+). Glutamate 133 (proton acceptor) is an active-site residue. Zn(2+) is bound by residues glutamate 134, glutamate 162, and histidine 348.

Belongs to the peptidase M20A family. DapE subfamily. In terms of assembly, homodimer. Requires Zn(2+) as cofactor. The cofactor is Co(2+).

The catalysed reaction is N-succinyl-(2S,6S)-2,6-diaminopimelate + H2O = (2S,6S)-2,6-diaminopimelate + succinate. Its pathway is amino-acid biosynthesis; L-lysine biosynthesis via DAP pathway; LL-2,6-diaminopimelate from (S)-tetrahydrodipicolinate (succinylase route): step 3/3. In terms of biological role, catalyzes the hydrolysis of N-succinyl-L,L-diaminopimelic acid (SDAP), forming succinate and LL-2,6-diaminopimelate (DAP), an intermediate involved in the bacterial biosynthesis of lysine and meso-diaminopimelic acid, an essential component of bacterial cell walls. This chain is Succinyl-diaminopimelate desuccinylase, found in Buchnera aphidicola subsp. Acyrthosiphon pisum (strain APS) (Acyrthosiphon pisum symbiotic bacterium).